We begin with the raw amino-acid sequence, 325 residues long: HTH-type transcriptional regulator BbuR (325 aa).

An HTH lysR-type domain is found at 15 to 72 (LDTDLLNVFCWVAKTQSFSRAAAELGTSQPVITRKIGRLEECLGVALFVRSNRGCVLT). The H-T-H motif DNA-binding region spans 32-51 (FSRAAAELGTSQPVITRKIG).

This sequence belongs to the LysR transcriptional regulatory family.

In Bordetella bronchiseptica (strain ATCC BAA-588 / NCTC 13252 / RB50) (Alcaligenes bronchisepticus), this protein is HTH-type transcriptional regulator BbuR (bbuR).